Reading from the N-terminus, the 449-residue chain is Na(+)-translocating NADH-quinone reductase subunit A (449 aa).

This sequence belongs to the NqrA family. Composed of six subunits; NqrA, NqrB, NqrC, NqrD, NqrE and NqrF.

It catalyses the reaction a ubiquinone + n Na(+)(in) + NADH + H(+) = a ubiquinol + n Na(+)(out) + NAD(+). Functionally, NQR complex catalyzes the reduction of ubiquinone-1 to ubiquinol by two successive reactions, coupled with the transport of Na(+) ions from the cytoplasm to the periplasm. NqrA to NqrE are probably involved in the second step, the conversion of ubisemiquinone to ubiquinol. In Actinobacillus pleuropneumoniae serotype 3 (strain JL03), this protein is Na(+)-translocating NADH-quinone reductase subunit A.